The following is a 465-amino-acid chain: Coumaroyl-CoA:anthocyanidin 3-O-glucoside-6''-O-coumaroyltransferase 2 (465 aa).

The residue at position 1 (Met1) is an N-acetylmethionine. Active-site proton acceptor residues include His173 and Asp406.

This sequence belongs to the plant acyltransferase family. As to expression, highly expressed in flowers, and leaves. Lower levels of expression in stems, roots and siliques.

Its function is as follows. Involved in the acylation of the 6'' position of the 3-O-glucose residue of anthocyanin. Also able to use flavonol 3-glucosides as the acyl acceptor. The chain is Coumaroyl-CoA:anthocyanidin 3-O-glucoside-6''-O-coumaroyltransferase 2 (3AT2) from Arabidopsis thaliana (Mouse-ear cress).